Consider the following 125-residue polypeptide: Histone H2A (125 aa).

Residues 1 to 18 (MSGRGKGGKAKAKAKSRS) are compositionally biased toward basic residues. A disordered region spans residues 1 to 21 (MSGRGKGGKAKAKAKSRSSRA). Position 2 is an N-acetylserine (Ser2). An N5-methylglutamine modification is found at Gln104.

This sequence belongs to the histone H2A family. In terms of assembly, the nucleosome is a histone octamer containing two molecules each of H2A, H2B, H3 and H4 assembled in one H3-H4 heterotetramer and two H2A-H2B heterodimers. The octamer wraps approximately 147 bp of DNA.

It localises to the nucleus. Its subcellular location is the chromosome. In terms of biological role, core component of nucleosome. Nucleosomes wrap and compact DNA into chromatin, limiting DNA accessibility to the cellular machineries which require DNA as a template. Histones thereby play a central role in transcription regulation, DNA repair, DNA replication and chromosomal stability. DNA accessibility is regulated via a complex set of post-translational modifications of histones, also called histone code, and nucleosome remodeling. The protein is Histone H2A of Mytilus californianus (California mussel).